We begin with the raw amino-acid sequence, 1302 residues long: MRILRGSPALSEFRVNKLLELCREQDLPVTGIYAEFMHFADLKSDLDDQELEKLEKLLTYGPTIEEHEPEGLLLLVTPRPGTISPWSSKSTDIAINCGLDTVKRLERGTAYYVESSVVLSEAQVDAVKALIHDRMMETVFTELEAASALFTVAEPKPVAHVDILAGGRLALEEANVSLGLALAEDEIDYLVENFTKLGRNPNDIELMMFAQANSEHCRHKIFNADWTIDGVDQEKSLFKMIKNTFETTPDHVLSAYKDNAAVMTGSKVGRFFPDPKSRQYTYHHEDAHILMKVETHNHPTAISPWPGASTGSGGEIRDEGATGIGGKPKAGLVGFTTSNLRIPGFEQPWETDFGKPGRIVNALDIMLEGPLGGAAFNNEFGRPNLLGYFRTYEEKVTSHAGEEVRGYHKPIMIAGGMGNIRDEHVQKKEIPVGASLIVLGGPAMNIGLGGGAASSMASGQSAEDLDFASVQRENPEMERRCQEVIDRCWQLGEENPIAFIHDVGAGGISNALPELCDDGERGGKFQLRDVPNDELSMSPLEIWCNESQERYVLAVAPENMEAFDAICKRERAPYAVVGVATEERHLTLEDSHFDNTPIDMPMDILLGKTPKMHREATTLKVDSPAIARDGIEIDEAADRVLRLPTVAEKTFLITIGDRSVTGLVARDQMVGPWQVPVANCAVTAASYDTYHGEAMSMGERTPVALLDFGASARLAVGESLTNIAATDIGDIKRIKLSANWMSPAGHPGEDAGLYEAVKAVGEELCPALGLTIPVGKDSMSMKTKWEENGESKEVTSPLSLVITAFGRVEDVRKTVTPQLRTSDTLEGLGDTSLVLVDLGNGKNRLGATALAQVYKQLGDKPADVDNAEQLKGFFDAMQNLVRNDKLLAYHDKGDGGLFVTLAEMAFAGHCGVKADIAELGEDALAVLFNEELGAVVQVKNDDLDSVLSTLAANGLEACSHVIGSVEASDDFVFTSGDDVVLKRSRTELRVIWAETTHKMQALRDNPACADQEFEAKKDNTDPGLNVSLSFDVNEDIAAPYIAKGAKPKMAILREQGVNSHVEMAAAFDRAGFEATDIHMSDILTGQAVLDEYQGLVACGGFSYGDVLGAGEGWAKSILFNAQAREQFQAFFNREETFSLGVCNGCQMLSNLKELIPGADLWPRFVRNESERFEARFSLVEVQKSDSVFFDGMAGSRMPIAVSHGEGRVEVRDGEHLNAIEASGTVALRYVDNNGNPTQQYPNNPNGSPNAITGLTTADGRVTIMMPHPERVFRTVANSWAPEGWGENGAWMRMFQNARKNIG.

ATP contacts are provided by residues 307-318 and alanine 678; that span reads GASTGSGGEIRD. Mg(2+) is bound by residues glutamate 718, asparagine 722, and aspartate 891. Residues 1049–1302 form the Glutamine amidotransferase type-1 domain; it reads MAILREQGVN…MFQNARKNIG (254 aa). Cysteine 1142 (nucleophile) is an active-site residue. Catalysis depends on residues histidine 1267 and glutamate 1269.

The protein in the N-terminal section; belongs to the FGAMS family. As to quaternary structure, monomer.

It is found in the cytoplasm. It catalyses the reaction N(2)-formyl-N(1)-(5-phospho-beta-D-ribosyl)glycinamide + L-glutamine + ATP + H2O = 2-formamido-N(1)-(5-O-phospho-beta-D-ribosyl)acetamidine + L-glutamate + ADP + phosphate + H(+). It functions in the pathway purine metabolism; IMP biosynthesis via de novo pathway; 5-amino-1-(5-phospho-D-ribosyl)imidazole from N(2)-formyl-N(1)-(5-phospho-D-ribosyl)glycinamide: step 1/2. Functionally, phosphoribosylformylglycinamidine synthase involved in the purines biosynthetic pathway. Catalyzes the ATP-dependent conversion of formylglycinamide ribonucleotide (FGAR) and glutamine to yield formylglycinamidine ribonucleotide (FGAM) and glutamate. The protein is Phosphoribosylformylglycinamidine synthase of Vibrio parahaemolyticus serotype O3:K6 (strain RIMD 2210633).